The chain runs to 362 residues: Salactin (362 aa).

Over residues 1-10 (MSDDTEDDSG) the composition is skewed to acidic residues. Residues 1–28 (MSDDTEDDSGGESTADMEFGEQPAPLGV) form a disordered region.

As to quaternary structure, forms dynamically unstable filaments. Monomers are added at the growing filament end. In vitro, salactin polymerizes in the presence of ATP and AMP-PNP but not in the presence of ADP, GTP, ATPgammaS or buffer alone.

It is found in the cytoplasm. Functionally, actin homolog which might be involved in partitioning DNA between daughter cells when chromosomal copy number is low. The protein is Salactin of Halobacterium salinarum (strain ATCC 700922 / JCM 11081 / NRC-1) (Halobacterium halobium).